Consider the following 327-residue polypeptide: Aspartate--ammonia ligase (327 aa).

It belongs to the class-II aminoacyl-tRNA synthetase family. AsnA subfamily.

The protein localises to the cytoplasm. The catalysed reaction is L-aspartate + NH4(+) + ATP = L-asparagine + AMP + diphosphate + H(+). The protein operates within amino-acid biosynthesis; L-asparagine biosynthesis; L-asparagine from L-aspartate (ammonia route): step 1/1. The polypeptide is Aspartate--ammonia ligase (Bacillus cereus (strain AH187)).